We begin with the raw amino-acid sequence, 96 residues long: Large ribosomal subunit protein bL27 (96 aa).

The propeptide occupies 1–9; that stretch reads MLRLDLQFF. A disordered region spans residues 13–35; that stretch reads KGVGSTKNGRDSQSKRLGAKRAD.

Belongs to the bacterial ribosomal protein bL27 family. Post-translationally, the N-terminus is cleaved by ribosomal processing cysteine protease Prp.

The polypeptide is Large ribosomal subunit protein bL27 (Bacillus cereus (strain B4264)).